The primary structure comprises 942 residues: UvrABC system protein A (942 aa).

Residue 31-38 participates in ATP binding; sequence GLSGSGKS. The segment at 253-280 adopts a C4-type zinc-finger fold; the sequence is CSECGYSLPELEPRLFSFNNPAGACPTC. 2 ABC transporter domains span residues 310-586 and 606-936; these read WDRR…EASI and YDAN…RFLT. 639–646 provides a ligand contact to ATP; sequence GVSGSGKS. A C4-type zinc finger spans residues 739–765; that stretch reads CEACQGDGVIKVEMHFLPDVYVPCDHC.

This sequence belongs to the ABC transporter superfamily. UvrA family. Forms a heterotetramer with UvrB during the search for lesions.

It is found in the cytoplasm. In terms of biological role, the UvrABC repair system catalyzes the recognition and processing of DNA lesions. UvrA is an ATPase and a DNA-binding protein. A damage recognition complex composed of 2 UvrA and 2 UvrB subunits scans DNA for abnormalities. When the presence of a lesion has been verified by UvrB, the UvrA molecules dissociate. The protein is UvrABC system protein A of Haemophilus ducreyi (strain 35000HP / ATCC 700724).